Consider the following 283-residue polypeptide: MEMO1 family protein DKAM_1357 (283 aa).

The protein belongs to the MEMO1 family.

In Desulfurococcus amylolyticus (strain DSM 18924 / JCM 16383 / VKM B-2413 / 1221n) (Desulfurococcus kamchatkensis), this protein is MEMO1 family protein DKAM_1357.